A 254-amino-acid chain; its full sequence is Ribosomal protein L11 methyltransferase (254 aa).

S-adenosyl-L-methionine contacts are provided by threonine 107, glycine 128, aspartate 149, serine 175, and asparagine 191.

Belongs to the methyltransferase superfamily. PrmA family.

It is found in the cytoplasm. It carries out the reaction L-lysyl-[protein] + 3 S-adenosyl-L-methionine = N(6),N(6),N(6)-trimethyl-L-lysyl-[protein] + 3 S-adenosyl-L-homocysteine + 3 H(+). The catalysed reaction is an N-terminal L-alpha-aminoacyl-[protein] + 3 S-adenosyl-L-methionine = an N-terminal trimethyl-L-alpha-aminoacyl-[protein] + 3 S-adenosyl-L-homocysteine + 3 H(+). Methylates ribosomal protein L11. Preferentially recognizes free L11 before its incorporation into 50S subunits. This function is dispensable for growth and thermostability. The sequence is that of Ribosomal protein L11 methyltransferase from Thermus thermophilus (strain ATCC 27634 / DSM 579 / HB8).